We begin with the raw amino-acid sequence, 90 residues long: DNA-binding protein HU (90 aa).

At T4 the chain carries Phosphothreonine. Residues 56-90 (AARKGRNPQTGEEMEIPASKVPAFKPGKALKDAVK) form a disordered region.

It belongs to the bacterial histone-like protein family. Homodimer.

Histone-like DNA-binding protein which is capable of wrapping DNA to stabilize it, and thus to prevent its denaturation under extreme environmental conditions. The protein is DNA-binding protein HU (hup) of Geobacillus stearothermophilus (Bacillus stearothermophilus).